We begin with the raw amino-acid sequence, 163 residues long: uncharacterized protein (163 aa).

A disordered region spans residues 144-163 (WSHSQSQLGTPGRGKGALGF). Over residues 154-163 (PGRGKGALGF) the composition is skewed to gly residues.

This is an uncharacterized protein from Homo sapiens (Human).